The chain runs to 916 residues: Isoleucine--tRNA ligase (916 aa).

The 'HIGH' region signature appears at 58 to 68 (PYANGHLHIGH). Glu-568 serves as a coordination point for L-isoleucyl-5'-AMP. The 'KMSKS' region motif lies at 609 to 613 (KMSKS). Lys-612 is a binding site for ATP. 4 residues coordinate Zn(2+): Cys-891, Cys-894, Cys-906, and Cys-909.

It belongs to the class-I aminoacyl-tRNA synthetase family. IleS type 1 subfamily. As to quaternary structure, monomer. Requires Zn(2+) as cofactor.

Its subcellular location is the cytoplasm. It carries out the reaction tRNA(Ile) + L-isoleucine + ATP = L-isoleucyl-tRNA(Ile) + AMP + diphosphate. Functionally, catalyzes the attachment of isoleucine to tRNA(Ile). As IleRS can inadvertently accommodate and process structurally similar amino acids such as valine, to avoid such errors it has two additional distinct tRNA(Ile)-dependent editing activities. One activity is designated as 'pretransfer' editing and involves the hydrolysis of activated Val-AMP. The other activity is designated 'posttransfer' editing and involves deacylation of mischarged Val-tRNA(Ile). The protein is Isoleucine--tRNA ligase of Campylobacter fetus subsp. fetus (strain 82-40).